We begin with the raw amino-acid sequence, 204 residues long: Prephenate decarboxylase (204 aa).

The protein belongs to the prephenate decarboxylase family.

Its subcellular location is the cytoplasm. It catalyses the reaction prephenate + H(+) = 3-[(4R)-4-hydroxycyclohexa-1,5-dien-1-yl]-2-oxopropanoate + CO2. The protein operates within antibiotic biosynthesis; bacilysin biosynthesis. In terms of biological role, part of the bacABCDEF operon responsible for the biosynthesis of the nonribosomally synthesized dipeptide antibiotic bacilysin, composed of L-alanine and L-anticapsin. Bacilysin is an irreversible inactivator of the glutaminase domain of glucosamine synthetase. BacA is an unusual prephenate decarboxylase that avoids the typical aromatization of the cyclohexadienol ring of prephenate. BacA catalyzes the protonation of prephenate (1-carboxy-4-hydroxy-alpha-oxo-2,5-cyclohexadiene-1-propanoic acid) at C6 position, followed by a decarboxylation to produce the endocyclic-delta(4),delta(8)-7R-dihydro-hydroxyphenylpyruvate (en-H2HPP). En-H2HPP is able to undergo a slow nonenzymatic isomerization to produce the exocyclic-delta(3),delta(5)-dihydro-hydroxyphenylpyruvate (ex-H2HPP). BacA isomerizes only the pro-R double bond in prephenate. This is Prephenate decarboxylase from Bacillus subtilis (strain 168).